We begin with the raw amino-acid sequence, 470 residues long: Origin of replication complex subunit 4 (470 aa).

Position 63-70 (63-70) interacts with ATP; the sequence is GPRGCGKA.

The protein belongs to the ORC4 family. As to quaternary structure, component of the origin recognition complex (ORC) composed of at least ORC1, ORC2, ORC3, ORC4, ORC5 and ORC6. ORC is regulated in a cell-cycle and development dependent manner. It is sequentially assembled at the exit from anaphase of mitosis and disassembled as cells enter S phase. Expressed in the shoot apical meristem (SAM), leaves, ears and roots (including root tips).

It localises to the nucleus. Its function is as follows. Component of the origin recognition complex (ORC) that binds origins of replication. DNA-binding is ATP-dependent. The specific DNA sequences that define origins of replication have not been identified yet. ORC is required to assemble the pre-replication complex necessary to initiate DNA replication. This Oryza sativa subsp. japonica (Rice) protein is Origin of replication complex subunit 4.